A 923-amino-acid chain; its full sequence is ATP-dependent Clp protease ATP-binding subunit ClpA homolog CD4B, chloroplastic (923 aa).

The Clp R domain occupies 92–234 (FERFTEKAIK…RTQVIRMVGE (143 aa)). Repeat regions lie at residues 95–160 (FTEK…IGRG) and 170–234 (FTPR…MVGE). Residues 255-502 (LEEYGTNLTK…RVRLRHAQLP (248 aa)) form an i region. 300–307 (GEPGVGKT) contributes to the ATP binding site. The UVR domain occupies 509-544 (EKELRQITKEKNEAVRGQDFEKAGELRDREMDLKAQ). An II region spans residues 569-760 (VTEADIQHIV…LLIMTSNVGS (192 aa)). 643–650 (GPTGVGKS) is an ATP binding site.

The protein belongs to the ClpA/ClpB family.

It localises to the plastid. It is found in the chloroplast. May interact with a ClpP-like protease involved in degradation of denatured proteins in the chloroplast. This Solanum lycopersicum (Tomato) protein is ATP-dependent Clp protease ATP-binding subunit ClpA homolog CD4B, chloroplastic (CD4B).